The following is a 1187-amino-acid chain: ATP-dependent DNA helicase MER3 (1187 aa).

The interval 1-41 is disordered; it reads MKTKFDRLGTGKRSRPSPNNIDFNDQSATFKRNKKNSRQPS. Positions 16 to 30 are enriched in polar residues; the sequence is PSPNNIDFNDQSATF. A Helicase ATP-binding domain is found at 148–322; sequence PSIYESNENC…WLKTNNELPA (175 aa). Position 161–168 (161–168) interacts with ATP; sequence SPTGSGKT. The short motif at 268-271 is the DEIH box element; sequence DEIH. One can recognise a Helicase C-terminal domain in the interval 360–542; the sequence is KLIEIIEKHA…NLIEHLAAET (183 aa). Positions 616–922 constitute an SEC63 domain; that stretch reads STAYGNAMTR…PKLEKIEFSI (307 aa). The C4-type zinc finger occupies 1039 to 1054; that stretch reads CFHSCKDKTQCRHLCC. Positions 1146-1187 are disordered; it reads NCPEIIPIDLESSDSYSSNTAASSISDPNGDLDFLGSDIEFE. The segment covering 1158–1171 has biased composition (low complexity); sequence SDSYSSNTAASSIS.

This sequence belongs to the helicase family. SKI2 subfamily. In terms of assembly, oligomerizes. It depends on a divalent metal cation as a cofactor. The cofactor is Zn(2+).

The protein resides in the nucleus. The enzyme catalyses Couples ATP hydrolysis with the unwinding of duplex DNA by translocating in the 3'-5' direction.. It carries out the reaction ATP + H2O = ADP + phosphate + H(+). Its function is as follows. DNA-dependent ATPase and 3'-5' DNA helicase. Required in the control of double strand break transition and crossover during meiosis. ATPase is slightly better stimulated by single-stranded (ss) than double-stranded (ds)DNA. Unwinds Holliday junction (HJ) DNA to Y-DNA and to ssDNA. Efficient unwinding requires 6 nucleotides of 3'-ssDNA; seems to initiate unwinding from blunt ends when they open slightly. Binds HJ, dsDNA, ssDNA and 3'- and 5-overhang DNA. This Saccharomyces cerevisiae (strain ATCC 204508 / S288c) (Baker's yeast) protein is ATP-dependent DNA helicase MER3.